A 154-amino-acid chain; its full sequence is UPF0178 protein YaiI (154 aa).

It belongs to the UPF0178 family.

This Escherichia fergusonii (strain ATCC 35469 / DSM 13698 / CCUG 18766 / IAM 14443 / JCM 21226 / LMG 7866 / NBRC 102419 / NCTC 12128 / CDC 0568-73) protein is UPF0178 protein YaiI.